Consider the following 266-residue polypeptide: Undecaprenyl-diphosphatase (266 aa).

Helical transmembrane passes span 1–21 (MDTF…FLPI), 39–59 (QGLS…VMYF), 87–107 (WWII…KDFI), 111–131 (FRSI…LWWA), 144–164 (VGWK…IPGT), 183–203 (AAAR…AILV), 218–238 (ALGL…HYFL), and 246–266 (MTPF…IIFL).

Belongs to the UppP family.

It is found in the cell inner membrane. The enzyme catalyses di-trans,octa-cis-undecaprenyl diphosphate + H2O = di-trans,octa-cis-undecaprenyl phosphate + phosphate + H(+). Catalyzes the dephosphorylation of undecaprenyl diphosphate (UPP). Confers resistance to bacitracin. The protein is Undecaprenyl-diphosphatase of Shewanella pealeana (strain ATCC 700345 / ANG-SQ1).